The sequence spans 76 residues: Large ribosomal subunit protein bL28 (76 aa).

It belongs to the bacterial ribosomal protein bL28 family.

The chain is Large ribosomal subunit protein bL28 from Opitutus terrae (strain DSM 11246 / JCM 15787 / PB90-1).